We begin with the raw amino-acid sequence, 501 residues long: MDALLQLKGIDKAFPGVKALSGAALNVYPGRVMALVGENGAGKSTMMKVLTGIYTRDAGSLLWLGKETTFNGPKSSQEAGIGIIHQELNLIPQLTIAENIFLGREFVNRFGKIDWKKMYAEADHLLAKLNLRFKSDKLVGELSIGDQQMVEIAKVLSFESKVIIMDEPTDALTDTETDSLFRVIRELKSQGRGIVYISHRMKEIFEICDDVTVFRDGQFIAEREVATLTEDSLIEMMVGRKLEDQYPHLDNAPGEIRLKVDNLCGPGVNDVSFVLRKGEILGISGLMGAGRTELMKVLYGAMPRTSGYVTLDGHEVVTRSPQDGLANGIVYISEDRKRDGLVLGMSVKENMSLTALDYFSRAGGSLKHKDEQQAVGDFIRLFNVKTPSMEQAIGLLSGGNQQKVAIARGLMTRPKVLILDEPTRGVDVGAKKEIYQLINQFKADGLSIILVSSEMPEVLGMSDRIIVMHEGHLSGEFTREQATQEVLMAAAVGKLNRVNQE.

2 consecutive ABC transporter domains span residues 5-241 (LQLK…VGRK) and 252-495 (APGE…VGKL). 37 to 44 (GENGAGKS) is an ATP binding site.

It belongs to the ABC transporter superfamily. Ribose importer (TC 3.A.1.2.1) family. In terms of assembly, the complex is composed of an ATP-binding protein (RbsA), two transmembrane proteins (RbsC) and a solute-binding protein (RbsB).

The protein localises to the cell inner membrane. The catalysed reaction is D-ribose(out) + ATP + H2O = D-ribose(in) + ADP + phosphate + H(+). In terms of biological role, part of the ABC transporter complex RbsABC involved in ribose import. Responsible for energy coupling to the transport system. The protein is Ribose import ATP-binding protein RbsA of Salmonella typhimurium (strain LT2 / SGSC1412 / ATCC 700720).